The primary structure comprises 488 residues: Acetyl-coenzyme A carboxylase carboxyl transferase subunit beta, chloroplastic (488 aa).

Residues 221–488 form the CoA carboxyltransferase N-terminal domain; the sequence is LWIQCDNCYA…FFPLNKNEIK (268 aa). Zn(2+)-binding residues include C225, C228, C244, and C247. A C4-type zinc finger spans residues 225 to 247; sequence CDNCYALIYKKALKLKLNVCEQC.

This sequence belongs to the AccD/PCCB family. Acetyl-CoA carboxylase is a heterohexamer composed of biotin carboxyl carrier protein, biotin carboxylase and 2 subunits each of ACCase subunit alpha and ACCase plastid-coded subunit beta (accD). Zn(2+) is required as a cofactor.

The protein localises to the plastid. It is found in the chloroplast stroma. It carries out the reaction N(6)-carboxybiotinyl-L-lysyl-[protein] + acetyl-CoA = N(6)-biotinyl-L-lysyl-[protein] + malonyl-CoA. Its pathway is lipid metabolism; malonyl-CoA biosynthesis; malonyl-CoA from acetyl-CoA: step 1/1. Component of the acetyl coenzyme A carboxylase (ACC) complex. Biotin carboxylase (BC) catalyzes the carboxylation of biotin on its carrier protein (BCCP) and then the CO(2) group is transferred by the transcarboxylase to acetyl-CoA to form malonyl-CoA. The chain is Acetyl-coenzyme A carboxylase carboxyl transferase subunit beta, chloroplastic from Aethionema grandiflorum (Persian stone-cress).